The primary structure comprises 302 residues: Nucleotide-binding protein Strop_3101 (302 aa).

26-33 provides a ligand contact to ATP; it reads GVSGGGRS. 77–80 lines the GTP pocket; the sequence is DVRS.

It belongs to the RapZ-like family.

In terms of biological role, displays ATPase and GTPase activities. This is Nucleotide-binding protein Strop_3101 from Salinispora tropica (strain ATCC BAA-916 / DSM 44818 / JCM 13857 / NBRC 105044 / CNB-440).